A 556-amino-acid chain; its full sequence is Arginine--tRNA ligase (556 aa).

Residues 134 to 144 (ANPTGPLHIGH) carry the 'HIGH' region motif.

This sequence belongs to the class-I aminoacyl-tRNA synthetase family. In terms of assembly, monomer.

Its subcellular location is the cytoplasm. It carries out the reaction tRNA(Arg) + L-arginine + ATP = L-arginyl-tRNA(Arg) + AMP + diphosphate. The protein is Arginine--tRNA ligase of Micrococcus luteus (strain ATCC 4698 / DSM 20030 / JCM 1464 / CCM 169 / CCUG 5858 / IAM 1056 / NBRC 3333 / NCIMB 9278 / NCTC 2665 / VKM Ac-2230) (Micrococcus lysodeikticus).